The chain runs to 88 residues: Large ribosomal subunit protein bL27 (88 aa).

Residues Met-1–Lys-24 form a disordered region.

It belongs to the bacterial ribosomal protein bL27 family.

The sequence is that of Large ribosomal subunit protein bL27 from Ehrlichia chaffeensis (strain ATCC CRL-10679 / Arkansas).